The following is a 163-amino-acid chain: Probable metallophosphoesterase MG207 (163 aa).

Mn(2+) is bound by residues Asp9, His11, Asp34, Asn53, His75, His107, and His109.

The protein belongs to the metallophosphoesterase superfamily. YfcE family. Mn(2+) serves as cofactor.

The protein is Probable metallophosphoesterase MG207 of Mycoplasma genitalium (strain ATCC 33530 / DSM 19775 / NCTC 10195 / G37) (Mycoplasmoides genitalium).